A 414-amino-acid chain; its full sequence is Phosphoglycerate kinase (414 aa).

The (2R)-3-phosphoglycerate site is built by valine 23, aspartate 24, phenylalanine 25, asparagine 26, arginine 39, serine 62, histidine 63, glycine 65, and arginine 66. Tyrosine 75 carries the phosphotyrosine modification. The residue at position 76 (serine 76) is a Phosphoserine. Leucine 121 and arginine 122 together coordinate (2R)-3-phosphoglycerate. At serine 143 the chain carries Phosphoserine. Residues histidine 168 and arginine 169 each coordinate (2R)-3-phosphoglycerate. Phosphoserine is present on residues serine 172, serine 173, and serine 183. Glycine 211 lines the ADP pocket. Glycine 211 lines the CDP pocket. The AMP site is built by alanine 212 and lysine 213. An ATP-binding site is contributed by alanine 212. A Mg(2+)-binding site is contributed by alanine 212. Mg(2+) is bound by residues alanine 215 and aspartate 216. Aspartate 216 lines the CDP pocket. AMP is bound at residue lysine 217. Position 217 (lysine 217) interacts with ATP. Residue glycine 235 coordinates ADP. Residue glycine 235 participates in CDP binding. Glycine 236 provides a ligand contact to AMP. Residue glycine 236 participates in ATP binding. Residues serine 253 and serine 260 each carry the phosphoserine modification. Threonine 299 is subject to Phosphothreonine. Glycine 310 contacts AMP. Glycine 310 serves as a coordination point for ATP. Residue serine 328 is modified to Phosphoserine. Positions 335, 337, and 340 each coordinate CDP. Phenylalanine 340 contacts ADP. Glutamate 341 contacts AMP. ATP is bound at residue glutamate 341. Serine 351 bears the Phosphoserine mark. The ATP site is built by aspartate 372 and threonine 373. Mg(2+) is bound at residue aspartate 372. Threonine 373 bears the Phosphothreonine mark. A phosphoserine mark is found at serine 387, serine 390, serine 412, and serine 413.

This sequence belongs to the phosphoglycerate kinase family. As to quaternary structure, monomer. Mg(2+) serves as cofactor.

The protein localises to the cytoplasm. The protein resides in the mitochondrion. It carries out the reaction (2R)-3-phosphoglycerate + ATP = (2R)-3-phospho-glyceroyl phosphate + ADP. It participates in carbohydrate degradation; glycolysis; pyruvate from D-glyceraldehyde 3-phosphate: step 2/5. In terms of biological role, catalyzes one of the two ATP producing reactions in the glycolytic pathway via the reversible conversion of 1,3-diphosphoglycerate to 3-phosphoglycerate. Both L- and D- forms of purine and pyrimidine nucleotides can be used as substrates, but the activity is much lower on pyrimidines. Negatively regulates the biosynthesis of acetyl-CoA from pyruvate in the mitochondrion. The polypeptide is Phosphoglycerate kinase (pgk1) (Schizosaccharomyces pombe (strain 972 / ATCC 24843) (Fission yeast)).